Here is a 710-residue protein sequence, read N- to C-terminus: MSDNDGLMLMNFTTESGPDNASSHRRVKVTGGKWKERRKLKMKLEGRPLRPKRPAAAVEEAPAAAVPEGSAIEPAAKRPRGRNERAPKDVPPQPANAQVVSSLFTSTRAITTSVNDHERASNDVAPSNAPLLQDTFEALGVRGTLLEHLTGKMKIQKPTKIQKMAIPEVLNGKADLFLHAQTGSGKTLAFLLPVLQTLLSLEQRIDRHSGCFAMIVTPTRELAAQIYGVISTLAQCCHYLVPCLLVGGERKKSEKARLRKGANFIVGTPGRMLDHLQNTKVAREQLPHSLRYLILDEGDKLMELGFEETLKSILEIVHSVACDNTRFPRLPQRIVHVLCSATRQGTVSKLGDIALTDPKVIAASDSTTDVSTVPDQLLQKIAIVPPKLRLVTLCAAISELSRKAPTETTTRTIVFISCADSVDFHYDVFSGLGGSHRDLVPGTVRELAAGSRALPCFSADSPPNTVFYKLHGSLPQAVRVATLRHFSSDAAATRGKHLVLFCTDVASRGLDLPRVSTVIEMDPPFAVEDHLHRIGRTARAGVAGESLLFLLPGEEEGYMEHIRAHHPRGWELLRYDRDLLAPAFAAPVARSDRPTTATDAAWDSNATTWHLNVERRVLEDPSAKDLAIKGYTSHIRAYATHISQEKRFFNVRCLHLGHLAKAFGLRERPKGMAAHRGKPATPKPKQDDARTKMLRMARQAVAQSNSEFNY.

The segment at 1-97 (MSDNDGLMLM…KDVPPQPANA (97 aa)) is disordered. Residues 11–21 (NFTTESGPDNA) show a composition bias toward polar residues. The span at 54–68 (PAAAVEEAPAAAVPE) shows a compositional bias: low complexity. The short motif at 134-163 (DTFEALGVRGTLLEHLTGKMKIQKPTKIQK) is the Q motif element. The region spanning 167–361 (PEVLNGKADL…DIALTDPKVI (195 aa)) is the Helicase ATP-binding domain. 180–187 (AQTGSGKT) serves as a coordination point for ATP. The DEAD box motif lies at 296–299 (DEGD). A Helicase C-terminal domain is found at 396-588 (AISELSRKAP…LLAPAFAAPV (193 aa)). A disordered region spans residues 669–690 (PKGMAAHRGKPATPKPKQDDAR).

It belongs to the DEAD box helicase family. DDX31/DBP7 subfamily.

It is found in the nucleus. It localises to the nucleolus. It carries out the reaction ATP + H2O = ADP + phosphate + H(+). ATP-binding RNA helicase involved in the biogenesis of 60S ribosomal subunits and is required for the normal formation of 25S and 5.8S rRNAs. The protein is ATP-dependent RNA helicase DBP7 (DBP7) of Eremothecium gossypii (strain ATCC 10895 / CBS 109.51 / FGSC 9923 / NRRL Y-1056) (Yeast).